A 93-amino-acid polypeptide reads, in one-letter code: HssA/B-like protein 23 (93 aa).

This sequence belongs to the hssA/B family.

This Dictyostelium discoideum (Social amoeba) protein is HssA/B-like protein 23 (hssl23).